The primary structure comprises 951 residues: Protocadherin-20 (951 aa).

An N-terminal signal peptide occupies residues Met-1–Gly-60. Residues Ser-61–Leu-890 lie on the Extracellular side of the membrane. 6 Cadherin domains span residues Arg-64–Phe-209, Pro-210–Phe-320, Thr-321–Phe-535, Leu-536–Phe-639, Ile-640–Val-742, and Gln-746–Ile-863. The N-linked (GlcNAc...) asparagine glycan is linked to Asn-135. Asn-326 and Asn-332 each carry an N-linked (GlcNAc...) asparagine glycan. N-linked (GlcNAc...) asparagine glycans are attached at residues Asn-680, Asn-748, Asn-803, Asn-844, and Asn-849. A helical transmembrane segment spans residues Val-891–Ile-911. Topologically, residues Cys-912–Ile-951 are cytoplasmic.

It localises to the cell membrane. Its function is as follows. Potential calcium-dependent cell-adhesion protein. The polypeptide is Protocadherin-20 (PCDH20) (Homo sapiens (Human)).